The sequence spans 391 residues: MSIIKMADLTLANQRVLIREDLNVPVTDGKITSDARLRAALPTLKLALEAGAKVMVMSHLGRPTEGQPEEKFSLKPVTDYLSAALNYPVRLVTDYLDGVDVAAGELVVFENIRFNLGEKKNDDTLAKKLAALCDVFVMDAFGTAHRAQASTHGVAKFAATACAGPLLSGELEALGKALDNPARPLVAIVGGSKVSTKLTVLDSLAGIVDQLVVGGGIANTFIAADGHNVGKSLYEADLVEEATRLTKQAKANNGDIPVPSDVVVATEFSASATATLKPVNEVTADEMIFDIGPETAKALTEIIANAGTIVWNGPVGVFEFDQFGEGTKVIAQAIADSSAFSIAGGGDTLAAVDKYEIADKISYISTGGGAFLEFLEGKKLPAVEILEQRAK.

Substrate is bound by residues 21–23, R36, 59–62, R113, and R146; these read DLN and HLGR. Residues K197, E319, and 345–348 each bind ATP; that span reads GGDT.

It belongs to the phosphoglycerate kinase family. As to quaternary structure, monomer.

Its subcellular location is the cytoplasm. The catalysed reaction is (2R)-3-phosphoglycerate + ATP = (2R)-3-phospho-glyceroyl phosphate + ADP. It participates in carbohydrate degradation; glycolysis; pyruvate from D-glyceraldehyde 3-phosphate: step 2/5. This is Phosphoglycerate kinase from Colwellia psychrerythraea (strain 34H / ATCC BAA-681) (Vibrio psychroerythus).